A 271-amino-acid chain; its full sequence is Sec-independent protein translocase protein TatC (271 aa).

5 helical membrane-spanning segments follow: residues 24–44, 78–98, 112–132, 159–179, and 215–235; these read ISVG…EQIF, FFAG…LFIA, FLFV…YFVF, LVIK…GLLL, and FTQV…IFFG. Residues 247 to 271 form a disordered region; it reads AAEEAQWAADHNVDDDDVDHPEHKA.

The protein belongs to the TatC family. In terms of assembly, the Tat system comprises two distinct complexes: a TatABC complex, containing multiple copies of TatA, TatB and TatC subunits, and a separate TatA complex, containing only TatA subunits. Substrates initially bind to the TatABC complex, which probably triggers association of the separate TatA complex to form the active translocon.

The protein localises to the cell inner membrane. Functionally, part of the twin-arginine translocation (Tat) system that transports large folded proteins containing a characteristic twin-arginine motif in their signal peptide across membranes. Together with TatB, TatC is part of a receptor directly interacting with Tat signal peptides. The polypeptide is Sec-independent protein translocase protein TatC (Magnetococcus marinus (strain ATCC BAA-1437 / JCM 17883 / MC-1)).